The sequence spans 140 residues: uncharacterized protein (140 aa).

It belongs to the SufE family.

This is an uncharacterized protein from Rhizobium meliloti (strain 1021) (Ensifer meliloti).